Here is a 194-residue protein sequence, read N- to C-terminus: Large ribosomal subunit protein bL12m (194 aa).

The N-terminal 33 residues, 1–33 (MSLRILAKRSSSIWMKTRVTPALISPITITTRF), are a transit peptide targeting the mitochondrion. N-linked (GlcNAc...) asparagine glycosylation occurs at N34. A disordered region spans residues 101 to 120 (AGNVPSSTGEAGSGAEEEAK). The span at 105 to 114 (PSSTGEAGSG) shows a compositional bias: low complexity.

It belongs to the bacterial ribosomal protein bL12 family. Component of the mitochondrial large ribosomal subunit (mt-LSU). Mature yeast 74S mitochondrial ribosomes consist of a small (37S) and a large (54S) subunit. The 37S small subunit contains a 15S ribosomal RNA (15S mt-rRNA) and 34 different proteins. The 54S large subunit contains a 21S rRNA (21S mt-rRNA) and 46 different proteins. In terms of processing, N-glycosylated.

The protein resides in the mitochondrion. Component of the mitochondrial ribosome (mitoribosome), a dedicated translation machinery responsible for the synthesis of mitochondrial genome-encoded proteins, including at least some of the essential transmembrane subunits of the mitochondrial respiratory chain. The mitoribosomes are attached to the mitochondrial inner membrane and translation products are cotranslationally integrated into the membrane. This Saccharomyces cerevisiae (strain ATCC 204508 / S288c) (Baker's yeast) protein is Large ribosomal subunit protein bL12m (MNP1).